The sequence spans 533 residues: Beta-glucosidase 24 (533 aa).

Positions 1-26 are cleaved as a signal peptide; the sequence is MVLQKLPLMSIGLLWLLIIVGPLVNA. Gln58 provides a ligand contact to a beta-D-glucoside. Asn64 and Asn88 each carry an N-linked (GlcNAc...) asparagine glycan. A beta-D-glucoside contacts are provided by residues His161 and 206–207; that span reads NE. Glu207 serves as the catalytic Proton donor. The cysteines at positions 226 and 239 are disulfide-linked. Tyr355 serves as a coordination point for a beta-D-glucoside. An N-linked (GlcNAc...) asparagine glycan is attached at Asn388. Glu427 lines the a beta-D-glucoside pocket. The Nucleophile role is filled by Glu427. N-linked (GlcNAc...) asparagine glycans are attached at residues Asn437, Asn442, and Asn470. A beta-D-glucoside contacts are provided by residues Trp477, 484-485, and Phe493; that span reads EW. Residue Asn503 is glycosylated (N-linked (GlcNAc...) asparagine). Positions 530 to 533 match the Prevents secretion from ER motif; the sequence is KDEL.

This sequence belongs to the glycosyl hydrolase 1 family.

It localises to the endoplasmic reticulum lumen. The catalysed reaction is Hydrolysis of terminal, non-reducing beta-D-glucosyl residues with release of beta-D-glucose.. The sequence is that of Beta-glucosidase 24 from Arabidopsis thaliana (Mouse-ear cress).